The chain runs to 353 residues: 2,4-diaminopentanoate dehydrogenase (353 aa).

The protein belongs to the DapB family. In terms of assembly, homodimer.

The catalysed reaction is (2R,4S)-2,4-diaminopentanoate + NAD(+) + H2O = (2R)-2-amino-4-oxopentanoate + NH4(+) + NADH + H(+). It carries out the reaction (2R,4S)-2,4-diaminopentanoate + NADP(+) + H2O = (2R)-2-amino-4-oxopentanoate + NH4(+) + NADPH + H(+). Its activity is regulated as follows. Inhibited by p-chloromercuribenzoate, iodoacetate and N-ethylmaleimide. Functionally, involved in the ornithine fermentation pathway. Catalyzes the oxidative deamination of (2R,4S)-2,4-diaminopentanoate (DAP) to yield 2-amino-4-ketopentanoate (AKP). The protein is 2,4-diaminopentanoate dehydrogenase of Acetoanaerobium sticklandii (strain ATCC 12662 / DSM 519 / JCM 1433 / CCUG 9281 / NCIMB 10654 / HF) (Clostridium sticklandii).